A 756-amino-acid chain; its full sequence is Deoxynucleotidyltransferase terminal-interacting protein 2 (756 aa).

The disordered stretch occupies residues 1 to 99; that stretch reads MVVTRSARAK…AESNYSVSEH (99 aa). Residues 9–21 are compositionally biased toward low complexity; sequence AKASIQAASAESS. Serine 21 bears the Phosphoserine mark. Composition is skewed to polar residues over residues 35–55 and 80–96; these read PESSTGSDARTTAESQTTGKQ and EPSTDGETSEAESNYSV. Serine 117 carries the phosphoserine modification. Phosphothreonine is present on threonine 129. Phosphoserine occurs at positions 141, 145, 148, 184, and 194. Residues 156 to 261 are disordered; the sequence is PTEKTTGARR…LSEINKPNFY (106 aa). Positions 201–211 are enriched in basic residues; it reads RRTRSMQRKLK. Glycyl lysine isopeptide (Lys-Gly) (interchain with G-Cter in SUMO2) cross-links involve residues lysine 217 and lysine 220. Position 232 is a phosphothreonine (threonine 232). 3 positions are modified to phosphoserine: serine 239, serine 251, and serine 253. A compositionally biased stretch (polar residues) spans 242 to 256; it reads RQTSHLQARSLSEIN. Residues lysine 257, lysine 316, and lysine 321 each participate in a glycyl lysine isopeptide (Lys-Gly) (interchain with G-Cter in SUMO2) cross-link. Phosphoserine is present on residues serine 324 and serine 330. Residue lysine 345 forms a Glycyl lysine isopeptide (Lys-Gly) (interchain with G-Cter in SUMO2) linkage. Serine 381 carries the phosphoserine modification. A Glycyl lysine isopeptide (Lys-Gly) (interchain with G-Cter in SUMO2) cross-link involves residue lysine 384. Phosphoserine is present on residues serine 434 and serine 512. Positions 505-542 form a coiled coil; that stretch reads LEEEDKASEVAIEEEKEEEEDEKSEEDSSDHDENEDEF. The disordered stretch occupies residues 510 to 547; it reads KASEVAIEEEKEEEEDEKSEEDSSDHDENEDEFSDEED. The interval 548–605 is tdBR region; mediates interaction with DNTT; it reads FLNSTKAKLLKLTSSSIDPGLSIKQLGGLYINFNADKLQSNKRTLTQIKEKKKNELLQ. Lysine 558 participates in a covalent cross-link: Glycyl lysine isopeptide (Lys-Gly) (interchain with G-Cter in SUMO2). Residue serine 569 is modified to Phosphoserine. Residues lysine 584 and lysine 606 each participate in a glycyl lysine isopeptide (Lys-Gly) (interchain with G-Cter in SUMO2) cross-link. Threonine 610 bears the Phosphothreonine mark. Residues lysine 626, lysine 649, lysine 658, lysine 686, and lysine 731 each participate in a glycyl lysine isopeptide (Lys-Gly) (interchain with G-Cter in SUMO2) cross-link.

As to quaternary structure, forms a ternary complex with DNTT and core histone; interaction with PCNA releases DNTT and H2A/H2B histones from this ternary complex. Interacts with ESR1, ESR2, PPARG and RXRA. Part of the small subunit (SSU) processome, composed of more than 70 proteins and the RNA chaperone small nucleolar RNA (snoRNA) U3. In terms of tissue distribution, widely expressed with higher levels in testis.

It is found in the nucleus. The protein localises to the nucleolus. Its function is as follows. Regulates the transcriptional activity of DNTT and ESR1. May function as a chromatin remodeling protein. Part of the small subunit (SSU) processome, first precursor of the small eukaryotic ribosomal subunit. During the assembly of the SSU processome in the nucleolus, many ribosome biogenesis factors, an RNA chaperone and ribosomal proteins associate with the nascent pre-rRNA and work in concert to generate RNA folding, modifications, rearrangements and cleavage as well as targeted degradation of pre-ribosomal RNA by the RNA exosome. This Homo sapiens (Human) protein is Deoxynucleotidyltransferase terminal-interacting protein 2.